The following is a 222-amino-acid chain: Phosphoribosylformylglycinamidine synthase subunit PurQ (222 aa).

The region spanning 3 to 222 (SAVVLLPGLN…LFEGALGIAA (220 aa)) is the Glutamine amidotransferase type-1 domain. C86 serves as the catalytic Nucleophile. Catalysis depends on residues H196 and E198.

In terms of assembly, part of the FGAM synthase complex composed of 1 PurL, 1 PurQ and 2 PurS subunits.

It is found in the cytoplasm. It catalyses the reaction N(2)-formyl-N(1)-(5-phospho-beta-D-ribosyl)glycinamide + L-glutamine + ATP + H2O = 2-formamido-N(1)-(5-O-phospho-beta-D-ribosyl)acetamidine + L-glutamate + ADP + phosphate + H(+). It carries out the reaction L-glutamine + H2O = L-glutamate + NH4(+). It participates in purine metabolism; IMP biosynthesis via de novo pathway; 5-amino-1-(5-phospho-D-ribosyl)imidazole from N(2)-formyl-N(1)-(5-phospho-D-ribosyl)glycinamide: step 1/2. In terms of biological role, part of the phosphoribosylformylglycinamidine synthase complex involved in the purines biosynthetic pathway. Catalyzes the ATP-dependent conversion of formylglycinamide ribonucleotide (FGAR) and glutamine to yield formylglycinamidine ribonucleotide (FGAM) and glutamate. The FGAM synthase complex is composed of three subunits. PurQ produces an ammonia molecule by converting glutamine to glutamate. PurL transfers the ammonia molecule to FGAR to form FGAM in an ATP-dependent manner. PurS interacts with PurQ and PurL and is thought to assist in the transfer of the ammonia molecule from PurQ to PurL. The polypeptide is Phosphoribosylformylglycinamidine synthase subunit PurQ (Mesorhizobium japonicum (strain LMG 29417 / CECT 9101 / MAFF 303099) (Mesorhizobium loti (strain MAFF 303099))).